The sequence spans 539 residues: 4-coumarate--CoA ligase 5 (539 aa).

S185, S186, G187, T188, T189, and K193 together coordinate ATP. Y235 and S239 together coordinate (E)-4-coumaroyl-AMP. R256 contributes to the CoA binding site. Positions 258-327 are SBD1; the sequence is DTVKMLQLVE…AKLPNAVLGQ (70 aa). A305, Q327, G328, T332, and M340 together coordinate (E)-4-coumaroyl-AMP. ATP contacts are provided by Q327, G328, and T332. The tract at residues 328–395 is SBD2; the sequence is GYGMTEAGPV…IRGKQIMKGY (68 aa). Residues D416 and R431 each coordinate ATP. (E)-4-coumaroyl-AMP-binding residues include K433 and K437. CoA contacts are provided by K439 and G440. K522 contributes to the ATP binding site.

The protein belongs to the ATP-dependent AMP-binding enzyme family. Mg(2+) is required as a cofactor. In terms of tissue distribution, expressed in roots, stems, leaf blades, leaf sheaths and spikelets.

It catalyses the reaction (E)-ferulate + ATP + CoA = (E)-feruloyl-CoA + AMP + diphosphate. It carries out the reaction (E)-4-coumarate + ATP + CoA = (E)-4-coumaroyl-CoA + AMP + diphosphate. The enzyme catalyses (E)-sinapate + ATP + CoA = (E)-sinapoyl-CoA + AMP + diphosphate. The catalysed reaction is (E)-caffeate + ATP + CoA = (E)-caffeoyl-CoA + AMP + diphosphate. It catalyses the reaction (E)-cinnamate + ATP + CoA = (E)-cinnamoyl-CoA + AMP + diphosphate. It carries out the reaction (E)-ferulate + ATP + H(+) = (E)-feruloyl-AMP + diphosphate. The enzyme catalyses (E)-feruloyl-AMP + CoA = (E)-feruloyl-CoA + AMP + H(+). The catalysed reaction is (E)-4-coumarate + ATP + H(+) = (E)-4-coumaroyl-AMP + diphosphate. It catalyses the reaction (E)-4-coumaroyl-AMP + CoA = (E)-4-coumaroyl-CoA + AMP + H(+). It carries out the reaction (E)-sinapate + ATP + H(+) = (E)-sinapoyl-AMP + diphosphate. The enzyme catalyses (E)-sinapoyl-AMP + CoA = (E)-sinapoyl-CoA + AMP + H(+). The catalysed reaction is (E)-caffeate + ATP + H(+) = (E)-caffeoyl-AMP + diphosphate. It catalyses the reaction (E)-caffeoyl-AMP + CoA = (E)-caffeoyl-CoA + AMP + H(+). Its pathway is phytoalexin biosynthesis; 3,4',5-trihydroxystilbene biosynthesis; 3,4',5-trihydroxystilbene from trans-4-coumarate: step 1/2. Involved in the phenylpropanoid metabolism by mediating the activation of a number of hydroxycinnamates for the biosynthesis of monolignols and other phenolic secondary metabolites. Catalyzes the formation of CoA esters of cinnamate, 4-coumarate, caffeate and ferulate. Is also able to convert sinapate to its corresponding CoA ester, a reaction that is rarely observed in 4CL catalysis. Is more efficient with substrates in the following order: ferulate &gt; 4-coumarate &gt; sinapate &gt; caffeate &gt; cinnamate. Follows a two-step reaction mechanism, wherein the carboxylate substrate first undergoes adenylation by ATP, followed by a thioesterification in the presence of CoA to yield the final CoA thioesters. The sequence is that of 4-coumarate--CoA ligase 5 from Oryza sativa subsp. japonica (Rice).